Reading from the N-terminus, the 538-residue chain is ATP synthase subunit beta 2 (538 aa).

Over residues 1-10 (MADPQATNGT) the composition is skewed to polar residues. The disordered stretch occupies residues 1-30 (MADPQATNGTGAACAERDASDVGDVSDVGD). An ATP-binding site is contributed by 185-192 (GGAGVGKT). Over residues 494–505 (AAAREADARREA) the composition is skewed to basic and acidic residues. Residues 494 to 538 (AAAREADARREAAAAASVAGPGTTSGTTSDPASGSAEPQGARHGR) form a disordered region. Low complexity predominate over residues 506 to 529 (AAAASVAGPGTTSGTTSDPASGSA).

Belongs to the ATPase alpha/beta chains family. As to quaternary structure, F-type ATPases have 2 components, CF(1) - the catalytic core - and CF(0) - the membrane proton channel. CF(1) has five subunits: alpha(3), beta(3), gamma(1), delta(1), epsilon(1). CF(0) has three main subunits: a(1), b(2) and c(9-12). The alpha and beta chains form an alternating ring which encloses part of the gamma chain. CF(1) is attached to CF(0) by a central stalk formed by the gamma and epsilon chains, while a peripheral stalk is formed by the delta and b chains.

It is found in the cell inner membrane. It carries out the reaction ATP + H2O + 4 H(+)(in) = ADP + phosphate + 5 H(+)(out). In terms of biological role, produces ATP from ADP in the presence of a proton gradient across the membrane. The catalytic sites are hosted primarily by the beta subunits. The polypeptide is ATP synthase subunit beta 2 (Burkholderia pseudomallei (strain K96243)).